Here is a 311-residue protein sequence, read N- to C-terminus: Pyrimidine-specific ribonucleoside hydrolase RihA (311 aa).

The active site involves His240.

The protein belongs to the IUNH family. RihA subfamily.

Its function is as follows. Hydrolyzes cytidine or uridine to ribose and cytosine or uracil, respectively. In Salmonella typhimurium (strain LT2 / SGSC1412 / ATCC 700720), this protein is Pyrimidine-specific ribonucleoside hydrolase RihA.